The following is a 329-amino-acid chain: UPF0725 protein EMB2204 (329 aa).

Belongs to the UPF0725 (EMB2204) family.

May be involved in embryogenesis. The sequence is that of UPF0725 protein EMB2204 (EMB2204) from Arabidopsis thaliana (Mouse-ear cress).